The following is a 496-amino-acid chain: Cytochrome P450 71A15 (496 aa).

The helical transmembrane segment at 3 to 23 (IIIISLCLATILAFLLLKPLL) threads the bilayer. Heme is bound at residue C439.

Belongs to the cytochrome P450 family. Requires heme as cofactor.

It localises to the membrane. This chain is Cytochrome P450 71A15 (CYP71A15), found in Arabidopsis thaliana (Mouse-ear cress).